A 625-amino-acid polypeptide reads, in one-letter code: Threonine--tRNA ligase (625 aa).

An editing domain region spans residues 1-147 (MRMLLIHSDY…TIVPEEAKVE (147 aa)). The segment at 206–505 (PHVRLMLEHE…MQEGKKPMFP (300 aa)) is catalytic. Zn(2+)-binding residues include Cys298, His350, and His474.

This sequence belongs to the class-II aminoacyl-tRNA synthetase family. In terms of assembly, homodimer. The cofactor is Zn(2+).

It localises to the cytoplasm. It catalyses the reaction tRNA(Thr) + L-threonine + ATP = L-threonyl-tRNA(Thr) + AMP + diphosphate + H(+). Its function is as follows. Catalyzes the attachment of threonine to tRNA(Thr) in a two-step reaction: L-threonine is first activated by ATP to form Thr-AMP and then transferred to the acceptor end of tRNA(Thr). Also edits incorrectly charged L-seryl-tRNA(Thr). This chain is Threonine--tRNA ligase, found in Pyrococcus furiosus (strain ATCC 43587 / DSM 3638 / JCM 8422 / Vc1).